A 363-amino-acid chain; its full sequence is UDP-N-acetylenolpyruvoylglucosamine reductase (363 aa).

The 171-residue stretch at 27–197 (LGGWATRVVT…LSVDFRLARS (171 aa)) folds into the FAD-binding PCMH-type domain. Residue Arg175 is part of the active site. Catalysis depends on Ser252, which acts as the Proton donor. Glu355 is a catalytic residue.

It belongs to the MurB family. It depends on FAD as a cofactor.

It localises to the cytoplasm. The enzyme catalyses UDP-N-acetyl-alpha-D-muramate + NADP(+) = UDP-N-acetyl-3-O-(1-carboxyvinyl)-alpha-D-glucosamine + NADPH + H(+). It functions in the pathway cell wall biogenesis; peptidoglycan biosynthesis. Its function is as follows. Cell wall formation. The chain is UDP-N-acetylenolpyruvoylglucosamine reductase from Salinispora arenicola (strain CNS-205).